We begin with the raw amino-acid sequence, 184 residues long: Two-component response regulator ARR5 (184 aa).

A Response regulatory domain is found at 26 to 154 (HVLAVDDSMV…DVKRLRDSLM (129 aa)). Residue Asp87 is modified to 4-aspartylphosphate.

Belongs to the ARR family. Type-A subfamily. Two-component system major event consists of a His-to-Asp phosphorelay between a sensor histidine kinase (HK) and a response regulator (RR). In plants, the His-to-Asp phosphorelay involves an additional intermediate named Histidine-containing phosphotransfer protein (HPt). This multistep phosphorelay consists of a His-Asp-His-Asp sequential transfer of a phosphate group between first a His and an Asp of the HK protein, followed by the transfer to a conserved His of the HPt protein and finally the transfer to an Asp in the receiver domain of the RR protein. In terms of tissue distribution, predominantly expressed in roots and shoot apical meristems.

The protein localises to the nucleus. Functions as a response regulator involved in His-to-Asp phosphorelay signal transduction system. Phosphorylation of the Asp residue in the receiver domain activates the ability of the protein to promote the transcription of target genes. Type-A response regulators seem to act as negative regulators of the cytokinin signaling. This Arabidopsis thaliana (Mouse-ear cress) protein is Two-component response regulator ARR5 (ARR5).